The primary structure comprises 346 residues: MTDDRIIGAGATREDDAADASIRPKRLADYLGQVPVREQMEIYIQAAKGRGDALDHVLIFGPPGLGKTTLSHVIANELGVALRVTSGPVIEKAGDLAALLTNLQPHDVLFIDEIHRLSPVVEEVLYPAMEDFQIDIMIGEGPAARSIKIDLPPFTLIGATTRAGLLTAPLRDRFGIVQRLEFYSVEELTRIVRRSASILGIDCTADGAGEIARRARGTPRIANRLLRRVRDYAQVKAGGHIDEPVAQAAMKMLKVDPEGFDELDRRLLKTMVDYFDGGPVGIESLAAALSEERGTLEDVVEPYLIQQGFLVRTARGRMATHKAYRHMGLKPKNPPQDLFAEVPDVG.

The tract at residues 2–183 (TDDRIIGAGA…FGIVQRLEFY (182 aa)) is large ATPase domain (RuvB-L). ATP-binding positions include Ile22, Arg23, Gly64, Lys67, Thr68, Thr69, 130 to 132 (EDF), Arg173, Tyr183, and Arg220. Thr68 contributes to the Mg(2+) binding site. Positions 184 to 254 (SVEELTRIVR…VAQAAMKMLK (71 aa)) are small ATPAse domain (RuvB-S). The segment at 257 to 346 (PEGFDELDRR…DLFAEVPDVG (90 aa)) is head domain (RuvB-H). Positions 293, 312, and 317 each coordinate DNA.

It belongs to the RuvB family. Homohexamer. Forms an RuvA(8)-RuvB(12)-Holliday junction (HJ) complex. HJ DNA is sandwiched between 2 RuvA tetramers; dsDNA enters through RuvA and exits via RuvB. An RuvB hexamer assembles on each DNA strand where it exits the tetramer. Each RuvB hexamer is contacted by two RuvA subunits (via domain III) on 2 adjacent RuvB subunits; this complex drives branch migration. In the full resolvosome a probable DNA-RuvA(4)-RuvB(12)-RuvC(2) complex forms which resolves the HJ.

Its subcellular location is the cytoplasm. It catalyses the reaction ATP + H2O = ADP + phosphate + H(+). Its function is as follows. The RuvA-RuvB-RuvC complex processes Holliday junction (HJ) DNA during genetic recombination and DNA repair, while the RuvA-RuvB complex plays an important role in the rescue of blocked DNA replication forks via replication fork reversal (RFR). RuvA specifically binds to HJ cruciform DNA, conferring on it an open structure. The RuvB hexamer acts as an ATP-dependent pump, pulling dsDNA into and through the RuvAB complex. RuvB forms 2 homohexamers on either side of HJ DNA bound by 1 or 2 RuvA tetramers; 4 subunits per hexamer contact DNA at a time. Coordinated motions by a converter formed by DNA-disengaged RuvB subunits stimulates ATP hydrolysis and nucleotide exchange. Immobilization of the converter enables RuvB to convert the ATP-contained energy into a lever motion, pulling 2 nucleotides of DNA out of the RuvA tetramer per ATP hydrolyzed, thus driving DNA branch migration. The RuvB motors rotate together with the DNA substrate, which together with the progressing nucleotide cycle form the mechanistic basis for DNA recombination by continuous HJ branch migration. Branch migration allows RuvC to scan DNA until it finds its consensus sequence, where it cleaves and resolves cruciform DNA. The polypeptide is Holliday junction branch migration complex subunit RuvB (Stenotrophomonas maltophilia (strain K279a)).